Reading from the N-terminus, the 121-residue chain is Phosphoribosyl-ATP pyrophosphatase (121 aa).

Belongs to the PRA-PH family.

The protein localises to the cytoplasm. It catalyses the reaction 1-(5-phospho-beta-D-ribosyl)-ATP + H2O = 1-(5-phospho-beta-D-ribosyl)-5'-AMP + diphosphate + H(+). The protein operates within amino-acid biosynthesis; L-histidine biosynthesis; L-histidine from 5-phospho-alpha-D-ribose 1-diphosphate: step 2/9. The polypeptide is Phosphoribosyl-ATP pyrophosphatase (Burkholderia multivorans (strain ATCC 17616 / 249)).